The chain runs to 149 residues: NPC intracellular cholesterol transporter 2 (149 aa).

A signal peptide spans 1 to 19; that stretch reads MRFLTVAFLFLALSASALA. 3 disulfide bridges follow: Cys-27/Cys-140, Cys-42/Cys-47, and Cys-93/Cys-99. Asn-58 carries N-linked (GlcNAc...) asparagine glycosylation. Lys-116 is modified (N6-acetyllysine).

Belongs to the NPC2 family. Interacts with NPC1 (via the second lumenal domain) in a cholestrol-dependent manner. Interacts with NUS1/NgBR, the interaction stabilizes NCP2 and regulates cholesterol trafficking. Interacts with DHDDS. Interacts with NEDD4L (via C2 domain). Interacts with NPC1L1. Expressed in kidney, spleen, liver and mammary gland, but not in testis.

Its subcellular location is the secreted. The protein localises to the endoplasmic reticulum. It localises to the lysosome. The enzyme catalyses cholesterol(in) = cholesterol(out). Functionally, intracellular cholesterol transporter which acts in concert with NPC1 and plays an important role in the egress of cholesterol from the lysosomal compartment. Unesterified cholesterol that has been released from LDLs in the lumen of the late endosomes/lysosomes is transferred by NPC2 to the cholesterol-binding pocket in the N-terminal domain of NPC1. May bind and mobilize cholesterol that is associated with membranes. NPC2 binds cholesterol with a 1:1 stoichiometry. Can bind a variety of sterols, including lathosterol, desmosterol and the plant sterols stigmasterol and beta-sitosterol. The secreted form of NCP2 regulates biliary cholesterol secretion via stimulation of ABCG5/ABCG8-mediated cholesterol transport. The protein is NPC intracellular cholesterol transporter 2 of Bos taurus (Bovine).